Here is a 188-residue protein sequence, read N- to C-terminus: UPF0301 protein PsycPRwf_0144 (188 aa).

It belongs to the UPF0301 (AlgH) family.

The sequence is that of UPF0301 protein PsycPRwf_0144 from Psychrobacter sp. (strain PRwf-1).